The chain runs to 1220 residues: DNA-directed RNA polymerase subunit beta' (1220 aa).

Residues Cys-60, Cys-62, Cys-75, and Cys-78 each coordinate Zn(2+). Residues Asp-449, Asp-451, and Asp-453 each coordinate Mg(2+). 4 residues coordinate Zn(2+): Cys-818, Cys-892, Cys-899, and Cys-902.

It belongs to the RNA polymerase beta' chain family. The RNAP catalytic core consists of 2 alpha, 1 beta, 1 beta' and 1 omega subunit. When a sigma factor is associated with the core the holoenzyme is formed, which can initiate transcription. Mg(2+) is required as a cofactor. Requires Zn(2+) as cofactor.

The enzyme catalyses RNA(n) + a ribonucleoside 5'-triphosphate = RNA(n+1) + diphosphate. In terms of biological role, DNA-dependent RNA polymerase catalyzes the transcription of DNA into RNA using the four ribonucleoside triphosphates as substrates. This is DNA-directed RNA polymerase subunit beta' from Lacticaseibacillus casei (strain BL23) (Lactobacillus casei).